A 395-amino-acid chain; its full sequence is Beta-1,4-galactosyltransferase 3 (395 aa).

Residues 1–10 lie on the Cytoplasmic side of the membrane; sequence MLRRLLERPC. The chain crosses the membrane as a helical; Signal-anchor for type II membrane protein span at residues 11–31; that stretch reads TLALLVGSQLAVMMYLSLGGF. Over 32–395 the chain is Lumenal; the sequence is RSLSALFGRD…ANHTAPRGSH (364 aa). An N-linked (GlcNAc...) asparagine glycan is attached at N57. C79 and C121 form a disulfide bridge. 132-136 contributes to the UDP-alpha-D-galactose binding site; sequence PHRAR. An N-linked (GlcNAc...) asparagine glycan is attached at N168. UDP-alpha-D-galactose is bound by residues 171 to 173, 198 to 199, Y228, and W260; these read FNR and VD. A disulfide bridge links C192 with C211. D199 contributes to the Mn(2+) binding site. Residue 262–265 coordinates N-acetyl-D-glucosamine; sequence GEDD. H293 serves as a coordination point for Mn(2+). Residue 293–295 coordinates UDP-alpha-D-galactose; that stretch reads HRG. R305 serves as a coordination point for N-acetyl-D-glucosamine. An N-linked (GlcNAc...) asparagine glycan is attached at N339. The tract at residues 340-395 is disordered; that stretch reads ITADIGTDPRGPRSPSGPRYPPGSSQAFRQEMLQRRPPARPGPLPTANHTAPRGSH. The span at 352 to 364 shows a compositional bias: low complexity; sequence RSPSGPRYPPGSS. An N-linked (GlcNAc...) asparagine glycan is attached at N387.

Belongs to the glycosyltransferase 7 family. Mn(2+) is required as a cofactor.

It is found in the golgi apparatus. It localises to the golgi stack membrane. The enzyme catalyses an N-acetyl-beta-D-glucosaminyl derivative + UDP-alpha-D-galactose = a beta-D-galactosyl-(1-&gt;4)-N-acetyl-beta-D-glucosaminyl derivative + UDP + H(+). It catalyses the reaction N-acetyl-D-glucosamine + UDP-alpha-D-galactose = beta-D-galactosyl-(1-&gt;4)-N-acetyl-D-glucosamine + UDP + H(+). It carries out the reaction a beta-D-GlcNAc-(1-&gt;3)-beta-D-Gal-(1-&gt;4)-beta-D-Glc-(1&lt;-&gt;1)-Cer(d18:1(4E)) + UDP-alpha-D-galactose = a neolactoside nLc4Cer(d18:1(4E)) + UDP + H(+). The catalysed reaction is a beta-D-glucosylceramide + UDP-alpha-D-galactose = a beta-D-galactosyl-(1-&gt;4)-beta-D-glucosyl-(1&lt;-&gt;1)-ceramide + UDP + H(+). The enzyme catalyses a neolactoside IV(3)-beta-GlcNAc-nLc4Cer + UDP-alpha-D-galactose = a neolactoside nLc6Cer + UDP + H(+). It functions in the pathway protein modification; protein glycosylation. In terms of biological role, responsible for the synthesis of complex-type N-linked oligosaccharides in many glycoproteins as well as the carbohydrate moieties of glycolipids. The protein is Beta-1,4-galactosyltransferase 3 of Mus musculus (Mouse).